Reading from the N-terminus, the 60-residue chain is Ras-related protein Rab-2A (60 aa).

Residues S1, C2, and T19 each contribute to the GTP site. S1 is a binding site for Mg(2+). The Effector region signature appears at H16–F24. T19 serves as a coordination point for Mg(2+).

It belongs to the small GTPase superfamily. Rab family. As to quaternary structure, interacts with PRKCI. Interacts with TRIP11. Interacts (in GTP-bound form) with GARIN1B. Interacts (GTP-bound) with HOPS complex component VPS39; interaction contributes to obtaining a functional HOPS complex that promotes autophagosome-lysosome membrane fusion driven by STX17-SNAP29-VAMP8. May interact with VPS41. Mg(2+) serves as cofactor. Prenylated. Prenylation is required for association with cellular membranes.

It localises to the endoplasmic reticulum-Golgi intermediate compartment membrane. Its subcellular location is the melanosome. It is found in the endoplasmic reticulum membrane. The protein localises to the golgi apparatus membrane. The protein resides in the cytoplasmic vesicle. It localises to the secretory vesicle. Its subcellular location is the acrosome. It is found in the autophagosome membrane. The catalysed reaction is GTP + H2O = GDP + phosphate + H(+). Its activity is regulated as follows. Regulated by guanine nucleotide exchange factors (GEFs) which promote the exchange of bound GDP for free GTP, GTPase activating proteins (GAPs) which increase the GTP hydrolysis activity, and GDP dissociation inhibitors (GDIs) which inhibit the dissociation of the nucleotide from the GTPase. Its function is as follows. The small GTPases Rab are key regulators of intracellular membrane trafficking, from the formation of transport vesicles to their fusion with membranes. Rabs cycle between active GTP-bound and inactive GDP-bound states. In their active state, drive transport of vesicular carriers from donor organelles to acceptor organelles to regulate the membrane traffic that maintains organelle identity and morphology. RAB2A regulates autophagy by promoting autophagosome-lysosome fusion via recruitment of the HOPS endosomal tethering complex; this process involves autophagosomal RAB2A and lysosomal RAB39A recruitment of HOPS subcomplexes VPS39-VPS11 and VPS41-VPS16-VPS18-VPS33A, respectively, which assemble into a functional complex to mediate membrane tethering and SNAREs-driven membrane fusion. Required for protein transport from the endoplasmic reticulum to the Golgi complex. Regulates the compacted morphology of the Golgi. Together with RAB2B, redundantly required for efficient autophagic flux. This is Ras-related protein Rab-2A from Mesocricetus auratus (Golden hamster).